Here is a 386-residue protein sequence, read N- to C-terminus: AVLMDLEPGTMDSVRTGPYGQIFRPDNFVFGQSGAGNNWAKGHYTEGAELIDSVLDVVRKEAENCDCLQGFQVCHSLGGGTGSGMGTLLISKIREEYPDRMMLTFSVFPSPKVSDTVVEPYNATLSVHQLVENADECMVLDNEALYDICFRTLKLTTPSFGDLNHLISATMSGVTCCLRFPGQLNSDLRKLAVNLIPFPRLHFFMVGFAPLTSRGSQQYRALTVPELTQQMWDSKNMMCAADPRHGRYLTASAMFRGKMSTKEVDEQMINVQNKNSSYFVEWIPNNVKSSVCDIPPTGLSMASTFIGNSTSIQEMFRRVSEQFTAMFRRKAFLHWYTGEGMDEMEFTEAESNMNDLVSEYQQYQDATADEEGEYEDEEEDLQAEDM.

Residues E7, S76, G80, T81, G82, N142, and N164 each contribute to the GTP site. E7 serves as a coordination point for Mg(2+). Residues Y363–M386 are disordered. Over residues T367 to M386 the composition is skewed to acidic residues.

Belongs to the tubulin family. Dimer of alpha and beta chains. A typical microtubule is a hollow water-filled tube with an outer diameter of 25 nm and an inner diameter of 15 nM. Alpha-beta heterodimers associate head-to-tail to form protofilaments running lengthwise along the microtubule wall with the beta-tubulin subunit facing the microtubule plus end conferring a structural polarity. Microtubules usually have 13 protofilaments but different protofilament numbers can be found in some organisms and specialized cells. Requires Mg(2+) as cofactor.

The protein resides in the cytoplasm. The protein localises to the cytoskeleton. Its function is as follows. Tubulin is the major constituent of microtubules, a cylinder consisting of laterally associated linear protofilaments composed of alpha- and beta-tubulin heterodimers. Microtubules grow by the addition of GTP-tubulin dimers to the microtubule end, where a stabilizing cap forms. Below the cap, tubulin dimers are in GDP-bound state, owing to GTPase activity of alpha-tubulin. The protein is Tubulin beta-1 chain (TUBB1) of Avena sativa (Oat).